A 311-amino-acid polypeptide reads, in one-letter code: Mediator of RNA polymerase II transcription subunit 27-B (311 aa).

It belongs to the Mediator complex subunit 27 family. Component of the Mediator complex.

Its subcellular location is the nucleus. Its function is as follows. Component of the Mediator complex, a coactivator involved in the regulated transcription of nearly all RNA polymerase II-dependent genes. Mediator functions as a bridge to convey information from gene-specific regulatory proteins to the basal RNA polymerase II transcription machinery. Mediator is recruited to promoters by direct interactions with regulatory proteins and serves as a scaffold for the assembly of a functional preinitiation complex with RNA polymerase II and the general transcription factors. This is Mediator of RNA polymerase II transcription subunit 27-B (med27-b) from Xenopus laevis (African clawed frog).